Reading from the N-terminus, the 92-residue chain is Probable Fe(2+)-trafficking protein (92 aa).

Belongs to the Fe(2+)-trafficking protein family.

Could be a mediator in iron transactions between iron acquisition and iron-requiring processes, such as synthesis and/or repair of Fe-S clusters in biosynthetic enzymes. The polypeptide is Probable Fe(2+)-trafficking protein (Shewanella sp. (strain W3-18-1)).